The primary structure comprises 108 residues: Complement inhibitor CirpT2 (108 aa).

The N-terminal stretch at 1-19 is a signal peptide; sequence MRTLVASLCVFAVFSAVCC. Cystine bridges form between Cys-40-Cys-64, Cys-59-Cys-98, Cys-76-Cys-99, and Cys-85-Cys-104.

Belongs to the CirpT family. As to expression, expressed in salivary glands.

It localises to the secreted. Functionally, complement inhibitor. Prevents complement-mediated activation of C5 by sterically preventing direct binding of C5 to its convertase (binding with domains MG4 and MG5). Binds C5 at a different binding site than the other tick complement inhibitors OmCI and RaCI3, and the drug eculizumab. Inhibits the complement in human, rat and guinea pig, and also shows a reduced inhibition in rabbit and pig. This chain is Complement inhibitor CirpT2, found in Dermacentor andersoni (Rocky mountain wood tick).